The sequence spans 1130 residues: BTB/POZ domain-containing protein 7 (1130 aa).

Polar residues predominate over residues 1-10 (MGANASNYPH). Positions 1–24 (MGANASNYPHSCSPRVGGNSQAQQ) are disordered. Gly-2 is lipidated: N-myristoyl glycine. BTB domains follow at residues 142–211 (TDVD…GMED) and 247–341 (YDVV…DLSV). The 67-residue stretch at 413–479 (YGSKWVHRQA…WGEHQLMKRI (67 aa)) folds into the BACK domain. At Ser-722 the chain carries Phosphoserine. Disordered regions lie at residues 898–1050 (SEAG…PAHV) and 1062–1130 (FGLT…KSAL). Basic and acidic residues-rich tracts occupy residues 923–935 (PTLE…RENQ) and 996–1005 (KKQEDPRREY). Ser-1008 bears the Phosphoserine mark. Over residues 1063–1075 (GLTSNRPPSHSAC) the composition is skewed to polar residues. Basic and acidic residues-rich tracts occupy residues 1080 to 1090 (LEERSSRRLTD) and 1101 to 1112 (RNADLERGDSIS).

Specifically expressed in embryonic epithelia.

Its subcellular location is the nucleus. Its function is as follows. Acts as a mediator of epithelial dynamics and organ branching by promoting cleft progression. Induced following accumulation of fibronectin in forming clefts, leading to local expression of the cell-scattering SNAIL2 and suppression of E-cadherin levels, thereby altering cell morphology and reducing cell-cell adhesion. This stimulates cell separation at the base of forming clefts by local, dynamic intercellular gap formation and promotes cleft progression. This is BTB/POZ domain-containing protein 7 (Btbd7) from Mus musculus (Mouse).